A 425-amino-acid polypeptide reads, in one-letter code: Protein CLP1 homolog (425 aa).

Residues E18, K59, and 121-126 (DVGKST) contribute to the ATP site.

Belongs to the Clp1 family. Clp1 subfamily.

It localises to the nucleus. Required for endonucleolytic cleavage during polyadenylation-dependent pre-mRNA 3'-end formation. The sequence is that of Protein CLP1 homolog (cbc) from Drosophila ananassae (Fruit fly).